We begin with the raw amino-acid sequence, 1003 residues long: Alpha-1,4 glucan phosphorylase L isozyme, chloroplastic/amyloplastic (1003 aa).

The N-terminal 64 residues, 1–64 (MASMTMRFHP…RRRSAFSVKC (64 aa)), are a transit peptide targeting the chloroplast. Disordered stretches follow at residues 71–91 (KQKV…SSFA) and 526–593 (SSEE…KKLP). A compositionally biased stretch (acidic residues) spans 537 to 553 (GEEEETSKEGGEEEEEK). Residues 569-580 (EVEKAIAEKDGT) are compositionally biased toward basic and acidic residues. Lysine 849 is modified (N6-(pyridoxal phosphate)lysine).

This sequence belongs to the glycogen phosphorylase family. Pyridoxal 5'-phosphate serves as cofactor. Found predominantly in cotyledons and early seed coat.

The protein localises to the plastid. It localises to the chloroplast. It is found in the amyloplast. It carries out the reaction [(1-&gt;4)-alpha-D-glucosyl](n) + phosphate = [(1-&gt;4)-alpha-D-glucosyl](n-1) + alpha-D-glucose 1-phosphate. Functionally, phosphorylase is an important allosteric enzyme in carbohydrate metabolism. Enzymes from different sources differ in their regulatory mechanisms and in their natural substrates. However, all known phosphorylases share catalytic and structural properties. Its function is as follows. The L isoform exhibits higher affinity for unbranched substrates such as glucan-like amylose and maltodextrin. This Vicia faba (Broad bean) protein is Alpha-1,4 glucan phosphorylase L isozyme, chloroplastic/amyloplastic (PHO1).